A 128-amino-acid chain; its full sequence is Large ribosomal subunit protein uL24 (128 aa).

The tract at residues 105–128 is disordered; it reads KAKSRQVGKEKGKYKEETIEKMQE.

This sequence belongs to the universal ribosomal protein uL24 family. In terms of assembly, component of the large ribosomal subunit.

The protein localises to the cytoplasm. Its function is as follows. Component of the large ribosomal subunit. The ribosome is a large ribonucleoprotein complex responsible for the synthesis of proteins in the cell. This Gallus gallus (Chicken) protein is Large ribosomal subunit protein uL24 (RPL26).